A 148-amino-acid polypeptide reads, in one-letter code: Hemoglobin subunit beta (148 aa).

The Globin domain occupies 3–148 (DWTDAERSAI…VVSALGRQYH (146 aa)). Heme b contacts are provided by H64 and H93.

Belongs to the globin family. In terms of assembly, heterotetramer of two alpha chains and two beta chains. Red blood cells.

Functionally, involved in oxygen transport from gills to the various peripheral tissues. In Oncorhynchus nerka (Sockeye salmon), this protein is Hemoglobin subunit beta (hbb).